We begin with the raw amino-acid sequence, 333 residues long: Leucine carboxyl methyltransferase 1 (333 aa).

Residues Lys42, Arg82, Gly107, Asp131, 181-182 (DL), and Glu208 each bind S-adenosyl-L-methionine.

Belongs to the methyltransferase superfamily. LCMT family.

It catalyses the reaction [phosphatase 2A protein]-C-terminal L-leucine + S-adenosyl-L-methionine = [phosphatase 2A protein]-C-terminal L-leucine methyl ester + S-adenosyl-L-homocysteine. Functionally, methylates the carboxyl group of the C-terminal leucine residue of protein phosphatase 2A catalytic subunits to form alpha-leucine ester residues. The chain is Leucine carboxyl methyltransferase 1 from Caenorhabditis elegans.